A 1452-amino-acid chain; its full sequence is Receptor-type tyrosine-protein phosphatase mu (1452 aa).

The signal sequence occupies residues 1-20 (MRGLGTCLATLAGLLLTAAG). The Extracellular portion of the chain corresponds to 21 to 742 (ETFSGGCLFD…PEKQTDHTVK (722 aa)). An MAM domain is found at 22–184 (TFSGGCLFDE…VKVLGHPCTR (163 aa)). A disulfide bridge connects residues Cys-27 and Cys-36. Residues Asn-72, Asn-92, Asn-131, and Asn-249 are each glycosylated (N-linked (GlcNAc...) asparagine). Disulfide bonds link Cys-96–Cys-182 and Cys-206–Cys-260. Positions 186–277 (PHFLRIQNVE…VGISNYAELV (92 aa)) constitute an Ig-like C2-type domain. Fibronectin type-III domains are found at residues 284–379 (PIAP…CADP), 382–480 (GPRK…TDED), 482–587 (PGAV…SAPS), and 589–671 (PAYE…DSLQ). Residues Asn-406, Asn-414, Asn-454, Asn-534, Asn-544, Asn-598, Asn-651, and Asn-681 are each glycosylated (N-linked (GlcNAc...) asparagine). A helical transmembrane segment spans residues 743-764 (IAGVIAGILLFVIIFLGVVLVM). Residues 765-1452 (KKRKLAKKRK…EVALEYLNSG (688 aa)) are Cytoplasmic-facing. Ser-821 is modified (phosphoserine). Tyrosine-protein phosphatase domains are found at residues 900–1154 (FKEE…ILEA) and 1186–1448 (IKEE…ALEY). Substrate is bound by residues Asp-1063, 1095-1101 (CSAGAGR), and Gln-1139. Cys-1095 serves as the catalytic Phosphocysteine intermediate. Cys-1389 (phosphocysteine intermediate) is an active-site residue.

It belongs to the protein-tyrosine phosphatase family. Receptor class 2B subfamily. Homodimer.

The protein resides in the cell membrane. It catalyses the reaction O-phospho-L-tyrosyl-[protein] + H2O = L-tyrosyl-[protein] + phosphate. Functionally, receptor protein-tyrosine phosphatase that mediates homotypic cell-cell interactions and plays a role in adipogenic differentiation via modulation of p120 catenin/CTNND1 phosphorylation. Promotes CTNND1 dephosphorylation and prevents its cytoplasmic localization where it inhibits SLC2A4 membrane trafficking. In turn, SLC2A4 is directed to the plasma membrane and performs its glucose transporter function. This chain is Receptor-type tyrosine-protein phosphatase mu (PTPRM), found in Homo sapiens (Human).